A 426-amino-acid polypeptide reads, in one-letter code: 5-methylthioadenosine/S-adenosylhomocysteine deaminase (426 aa).

Zn(2+) contacts are provided by H60 and H62. Substrate is bound by residues E89 and H179. Residue H206 participates in Zn(2+) binding. Residues E209 and D294 each coordinate substrate. Residue D294 coordinates Zn(2+).

The protein belongs to the metallo-dependent hydrolases superfamily. MTA/SAH deaminase family. Zn(2+) serves as cofactor.

It carries out the reaction S-adenosyl-L-homocysteine + H2O + H(+) = S-inosyl-L-homocysteine + NH4(+). It catalyses the reaction S-methyl-5'-thioadenosine + H2O + H(+) = S-methyl-5'-thioinosine + NH4(+). In terms of biological role, catalyzes the deamination of 5-methylthioadenosine and S-adenosyl-L-homocysteine into 5-methylthioinosine and S-inosyl-L-homocysteine, respectively. Is also able to deaminate adenosine. The protein is 5-methylthioadenosine/S-adenosylhomocysteine deaminase of Dictyoglomus turgidum (strain DSM 6724 / Z-1310).